A 237-amino-acid polypeptide reads, in one-letter code: Methylosome subunit pICln (237 aa).

N-acetylserine is present on S2. Phosphoserine is present on residues S102, S144, S193, and S195. At T223 the chain carries Phosphothreonine.

The protein belongs to the pICln (TC 1.A.47) family. As to quaternary structure, component of the methylosome, a 20S complex containing at least PRMT5/SKB1, WDR77/MEP50 and CLNS1A/pICln. May mediate SNRPD1 and SNRPD3 methylation. Forms a 6S pICln-Sm complex composed of CLNS1A/pICln, SNRPD1, SNRPD2, SNRPE, SNRPF and SNRPG; ring-like structure where CLNS1A/pICln mimics additional Sm proteins and which is unable to assemble into the core snRNP. Interacts with LSM10 and LSM11.

The protein localises to the cytoplasm. It is found in the cytosol. Its subcellular location is the nucleus. It localises to the cytoskeleton. Its function is as follows. Involved in both the assembly of spliceosomal snRNPs and the methylation of Sm proteins. Chaperone that regulates the assembly of spliceosomal U1, U2, U4 and U5 small nuclear ribonucleoproteins (snRNPs), the building blocks of the spliceosome, and thereby plays an important role in the splicing of cellular pre-mRNAs. Most spliceosomal snRNPs contain a common set of Sm proteins SNRPB, SNRPD1, SNRPD2, SNRPD3, SNRPE, SNRPF and SNRPG that assemble in a heptameric protein ring on the Sm site of the small nuclear RNA to form the core snRNP (Sm core). In the cytosol, the Sm proteins SNRPD1, SNRPD2, SNRPE, SNRPF and SNRPG are trapped in an inactive 6S pICln-Sm complex by the chaperone CLNS1A that controls the assembly of the core snRNP. Dissociation by the SMN complex of CLNS1A from the trapped Sm proteins and their transfer to an SMN-Sm complex triggers the assembly of core snRNPs and their transport to the nucleus. The sequence is that of Methylosome subunit pICln (CLNS1A) from Pongo abelii (Sumatran orangutan).